The chain runs to 605 residues: Translation factor GUF1 homolog, chloroplastic (605 aa).

The tr-type G domain maps to 7-189 (RRIRNFSIIA…RIVQVVPPPR (183 aa)). Residues 16–23 (AHIDHGKS), 82–86 (DTPGH), and 136–139 (NKID) each bind GTP.

The protein belongs to the TRAFAC class translation factor GTPase superfamily. Classic translation factor GTPase family. LepA subfamily.

It is found in the plastid. The protein localises to the chloroplast. The catalysed reaction is GTP + H2O = GDP + phosphate + H(+). In terms of biological role, promotes chloroplast protein synthesis. May act as a fidelity factor of the translation reaction, by catalyzing a one-codon backward translocation of tRNAs on improperly translocated ribosomes. This chain is Translation factor GUF1 homolog, chloroplastic, found in Ostreococcus lucimarinus (strain CCE9901).